The sequence spans 853 residues: WEB family protein At5g16730, chloroplastic (853 aa).

Low complexity-rich tracts occupy residues 1–27 (MASK…PATP) and 36–49 (KSET…STTT). Residues 1–84 (MASKTKTSLS…PTPPEKSQAR (84 aa)) constitute a chloroplast transit peptide. Disordered stretches follow at residues 1 to 106 (MASK…IKED), 386 to 465 (KEDL…SKKA), 666 to 765 (LAKK…SVEV), and 778 to 820 (KEAF…ALTA). The span at 92 to 101 (ESPQTTTRLS) shows a compositional bias: polar residues. A coiled-coil region spans residues 94–670 (PQTTTRLSQI…LEEAILAKKQ (577 aa)). Composition is skewed to basic and acidic residues over residues 402–465 (EVSK…SKKA), 698–718 (NGHR…HEPP), and 732–753 (MEEK…KKDE). The span at 754 to 763 (SQDDDKDDSV) shows a compositional bias: acidic residues. Basic and acidic residues predominate over residues 778–788 (KEAFPDKKSEL). Position 790 is a phosphoserine (Ser790). A compositionally biased stretch (basic and acidic residues) spans 797–807 (SSKIDESDKTS).

Belongs to the WEB family.

The protein localises to the plastid. It is found in the chloroplast. This chain is WEB family protein At5g16730, chloroplastic, found in Arabidopsis thaliana (Mouse-ear cress).